The sequence spans 219 residues: Hemolysin-3 (219 aa).

Helical transmembrane passes span 19-39, 49-69, 83-103, 112-132, 138-158, 165-185, and 194-214; these read AITH…LIIH, VVAF…STLL, ILDH…FLLI, TLLA…IFFV, ASTL…KPLY, GFSL…FFLW, and IWHL…LFYV.

It belongs to the UPF0073 (Hly-III) family.

Its subcellular location is the cell membrane. In terms of biological role, might be virulent against a mammalian host; when expressed in E.coli, the soluble extract has hemolytic activity on human erythrocytes. The activity is not inhibited by cholesterol or activated by 2-mercaptoethanol. Might be pore-forming protein. Its in vivo role in virulence is untested, nor has it been shown to be secreted by B.cereus. This chain is Hemolysin-3, found in Bacillus cereus.